The sequence spans 156 residues: Small ribosomal subunit protein uS7 (156 aa).

This sequence belongs to the universal ribosomal protein uS7 family. Part of the 30S ribosomal subunit. Contacts proteins S9 and S11.

Its function is as follows. One of the primary rRNA binding proteins, it binds directly to 16S rRNA where it nucleates assembly of the head domain of the 30S subunit. Is located at the subunit interface close to the decoding center, probably blocks exit of the E-site tRNA. The protein is Small ribosomal subunit protein uS7 of Synechococcus elongatus (strain ATCC 33912 / PCC 7942 / FACHB-805) (Anacystis nidulans R2).